Consider the following 947-residue polypeptide: Protein RRC1-like (947 aa).

Positions 1–11 are enriched in basic and acidic residues; that stretch reads MVKDEFFLDHP. 2 disordered regions span residues 1-35 and 63-167; these read MVKD…RMKQ and PNDN…DELP. Residues 12–34 are compositionally biased toward basic residues; that stretch reads GRKHRSRNTEKKKKPRRRERRMK. Basic and acidic residues-rich tracts occupy residues 66–84 and 104–155; these read NKLK…DSIS and KGPE…DHNS. The 82-residue stretch at 187-268 folds into the RRM domain; it reads TNLYVVNLSS…YELKIGWGKV (82 aa). Residues 336 to 379 form an SURP motif repeat; the sequence is IIDTMALNVLDGGCAFEQAIMERGRGNPLFNFLFELGSKEHTYY. The disordered stretch occupies residues 412 to 434; that stretch reads PPLPATRSPEHGKESRGTYAAGK. The region spanning 444–589 is the CID domain; sequence LTDSQRDEFE…GLRATFLRSR (146 aa). Positions 638–672 constitute an SAP domain; it reads LMNRPISELERRCRHNGLSLLGGREMMVARLVCLK. Disordered regions lie at residues 752-797 and 846-947; these read REDD…PENE and GLSG…RGMR. 3 stretches are compositionally biased toward basic and acidic residues: residues 854–876, 888–916, and 924–947; these read LPEK…RSES, LTRE…LDKD, and SSRE…RGMR.

In terms of tissue distribution, expressed in leaves, inflorescence stems, roots, flower buds, open flowers and siliques.

Functionally, probable SR-like splicing factor. This chain is Protein RRC1-like, found in Arabidopsis thaliana (Mouse-ear cress).